A 254-amino-acid polypeptide reads, in one-letter code: Type III pantothenate kinase (254 aa).

22–29 (VLGNTHVR) lines the ATP pocket. Substrate is bound by residues Tyr-89 and 93–96 (GLDR). Asp-95 (proton acceptor) is an active-site residue. Asp-115 contacts K(+). Thr-118 contacts ATP. Residue Thr-173 participates in substrate binding.

This sequence belongs to the type III pantothenate kinase family. As to quaternary structure, homodimer. The cofactor is NH4(+). K(+) is required as a cofactor.

The protein localises to the cytoplasm. It catalyses the reaction (R)-pantothenate + ATP = (R)-4'-phosphopantothenate + ADP + H(+). Its pathway is cofactor biosynthesis; coenzyme A biosynthesis; CoA from (R)-pantothenate: step 1/5. Catalyzes the phosphorylation of pantothenate (Pan), the first step in CoA biosynthesis. This chain is Type III pantothenate kinase, found in Synechococcus sp. (strain JA-2-3B'a(2-13)) (Cyanobacteria bacterium Yellowstone B-Prime).